A 167-amino-acid chain; its full sequence is Endoribonuclease YbeY (167 aa).

Zn(2+) contacts are provided by His-131, His-135, and His-141.

The protein belongs to the endoribonuclease YbeY family. Zn(2+) is required as a cofactor.

Its subcellular location is the cytoplasm. Functionally, single strand-specific metallo-endoribonuclease involved in late-stage 70S ribosome quality control and in maturation of the 3' terminus of the 16S rRNA. This Rickettsia conorii (strain ATCC VR-613 / Malish 7) protein is Endoribonuclease YbeY.